The primary structure comprises 191 residues: MAP6 domain-containing protein 1 (191 aa).

S-palmitoyl cysteine attachment occurs at residues Cys5, Cys10, and Cys11. Residues 31-106 form a disordered region; the sequence is HGYSDPGSEE…RGQSSAPPTR (76 aa). A phosphoserine mark is found at Ser38 and Ser41. 2 mn regions span residues 123–136 and 158–170; these read TTSY…WTGV and DPSP…VPEV. The residue at position 160 (Ser160) is a Phosphoserine.

It belongs to the STOP family. In terms of assembly, interacts with calmodulin. Post-translationally, palmitoylated. Palmitoylation enhances association with microtubules. As to expression, expressed in brain. Found in neurons in primary cultures, but absent in glial cells.

It localises to the golgi apparatus. The protein localises to the cytoplasm. Its subcellular location is the cytoskeleton. Functionally, may have microtubule-stabilizing activity. In Mus musculus (Mouse), this protein is MAP6 domain-containing protein 1 (Map6d1).